A 932-amino-acid chain; its full sequence is Isoleucine--tRNA ligase (932 aa).

Positions 58–68 (PYANGDIHIGH) match the 'HIGH' region motif. An L-isoleucyl-5'-AMP-binding site is contributed by E559. Positions 600–604 (KMSKS) match the 'KMSKS' region motif. Residue K603 participates in ATP binding. Residues C895, C898, C915, and C918 each coordinate Zn(2+).

The protein belongs to the class-I aminoacyl-tRNA synthetase family. IleS type 1 subfamily. Monomer. Zn(2+) is required as a cofactor.

The protein resides in the cytoplasm. It catalyses the reaction tRNA(Ile) + L-isoleucine + ATP = L-isoleucyl-tRNA(Ile) + AMP + diphosphate. In terms of biological role, catalyzes the attachment of isoleucine to tRNA(Ile). As IleRS can inadvertently accommodate and process structurally similar amino acids such as valine, to avoid such errors it has two additional distinct tRNA(Ile)-dependent editing activities. One activity is designated as 'pretransfer' editing and involves the hydrolysis of activated Val-AMP. The other activity is designated 'posttransfer' editing and involves deacylation of mischarged Val-tRNA(Ile). This Saccharophagus degradans (strain 2-40 / ATCC 43961 / DSM 17024) protein is Isoleucine--tRNA ligase.